The following is a 994-amino-acid chain: Sarcoplasmic/endoplasmic reticulum calcium ATPase 1 (994 aa).

At 1-48 (MEAAHSKSTEECLSYFGVSETTGLTPDQVKRHLEKYGPNELPAEEGKS) the chain is on the cytoplasmic side. The helical transmembrane segment at 49 to 69 (LWELVVEQFEDLLVRILLLAA) threads the bilayer. Topologically, residues 70–89 (CISFVLAWFEEGEETVTAFV) are lumenal. The helical transmembrane segment at 90–110 (EPFVILLILIANAIVGVWQER) threads the bilayer. At 111–253 (NAENAIEALK…QDKTPLQQKL (143 aa)) the chain is on the cytoplasmic side. A helical transmembrane segment spans residues 254-273 (DEFGEQLSKVISLICVAVWL). At 274–295 (INIGHFNDPVHGGSWFRGAIYY) the chain is on the lumenal side. The chain crosses the membrane as a helical span at residues 296–313 (FKIAVALAVAAIPEGLPA). Residues valine 304, alanine 305, isoleucine 307, and glutamate 309 each coordinate Ca(2+). At 314–757 (VITTCLALGT…EEGRAIYNNM (444 aa)) the chain is on the cytoplasmic side. The active-site 4-aspartylphosphate intermediate is aspartate 351. Mg(2+)-binding residues include aspartate 351 and threonine 353. Threonine 353 contacts ATP. Position 441 is a phosphothreonine (threonine 441). Glutamate 442, arginine 489, lysine 515, and arginine 560 together coordinate ATP. Threonine 569 is subject to Phosphothreonine. Phosphoserine is present on serine 581. The ATP site is built by threonine 625, glycine 626, and aspartate 627. Phosphoserine is present on serine 643. Arginine 678 and lysine 684 together coordinate ATP. Residue aspartate 703 coordinates Mg(2+). Asparagine 706 contacts ATP. A helical membrane pass occupies residues 758 to 777 (KQFIRYLISSNVGEVVCIFL). Ca(2+) contacts are provided by asparagine 768 and glutamate 771. Over 778 to 787 (TAALGLPEAL) the chain is Lumenal. A helical transmembrane segment spans residues 788–808 (IPVQLLWVNLVTDGLPATALG). The interval 788 to 808 (IPVQLLWVNLVTDGLPATALG) is interaction with PLN. Ca(2+)-binding residues include asparagine 796, threonine 799, and aspartate 800. The Cytoplasmic portion of the chain corresponds to 809 to 828 (FNPPDLDIMDRPPRSPKEPL). A helical membrane pass occupies residues 829–851 (ISGWLFFRYMAIGGYVGAATVGA). At 852–897 (AAWWFLYAEDGPHVSYHQLTHFMQCTEHNPEFDGLDCEVFEAPEPM) the chain is on the lumenal side. A disulfide bridge links cysteine 876 with cysteine 888. The chain crosses the membrane as a helical span at residues 898–917 (TMALSVLVTIEMCNALNSLS). Glutamate 908 contacts Ca(2+). At 918–930 (ENQSLLRMPPWVN) the chain is on the cytoplasmic side. A helical transmembrane segment spans residues 931–949 (IWLLGSICLSMSLHFLILY). Residues 932 to 943 (WLLGSICLSMSL) form an interaction with PLN region. Residues 950-964 (VDPLPMIFKLRALDF) lie on the Lumenal side of the membrane. A helical transmembrane segment spans residues 965 to 985 (TQWLMVLKISLPVIGLDELLK). Residues 986-994 (FIARNYLEG) lie on the Cytoplasmic side of the membrane.

This sequence belongs to the cation transport ATPase (P-type) (TC 3.A.3) family. Type IIA subfamily. As to quaternary structure, interacts with sarcolipin (SLN). Interacts with phospholamban (PLN). Interacts with myoregulin (MRLN). Interacts with DWORF. Interacts with VMP1. Mg(2+) is required as a cofactor.

The protein localises to the endoplasmic reticulum membrane. The protein resides in the sarcoplasmic reticulum membrane. It carries out the reaction Ca(2+)(in) + ATP + H2O = Ca(2+)(out) + ADP + phosphate + H(+). With respect to regulation, inhibited by sarcolipin (SLN) and myoregulin (MRLN). Has also been shown to be reversibly inhibited by phospholamban (PLN) at low calcium concentrations in vitro. Dephosphorylated PLN decreases the apparent affinity of the ATPase for calcium in vitro and this inhibition is regulated by the phosphorylation of PLN. Enhanced by DWORF; DWORF increases activity by displacing sarcolipin (SLN), phospholamban (PLN) and myoregulin (MRLN). Key regulator of striated muscle performance by acting as the major Ca(2+) ATPase responsible for the reuptake of cytosolic Ca(2+) into the sarcoplasmic reticulum. Catalyzes the hydrolysis of ATP coupled with the translocation of calcium from the cytosol to the sarcoplasmic reticulum lumen. Contributes to calcium sequestration involved in muscular excitation/contraction. The sequence is that of Sarcoplasmic/endoplasmic reticulum calcium ATPase 1 (Atp2a1) from Mus musculus (Mouse).